Consider the following 78-residue polypeptide: ATP synthase subunit c (78 aa).

Transmembrane regions (helical) follow at residues leucine 16–leucine 36 and methionine 57–valine 77.

The protein belongs to the ATPase C chain family. In terms of assembly, F-type ATPases have 2 components, F(1) - the catalytic core - and F(0) - the membrane proton channel. F(1) has five subunits: alpha(3), beta(3), gamma(1), delta(1), epsilon(1). F(0) has three main subunits: a(1), b(2) and c(10-14). The alpha and beta chains form an alternating ring which encloses part of the gamma chain. F(1) is attached to F(0) by a central stalk formed by the gamma and epsilon chains, while a peripheral stalk is formed by the delta and b chains.

It is found in the cell inner membrane. F(1)F(0) ATP synthase produces ATP from ADP in the presence of a proton or sodium gradient. F-type ATPases consist of two structural domains, F(1) containing the extramembraneous catalytic core and F(0) containing the membrane proton channel, linked together by a central stalk and a peripheral stalk. During catalysis, ATP synthesis in the catalytic domain of F(1) is coupled via a rotary mechanism of the central stalk subunits to proton translocation. Functionally, key component of the F(0) channel; it plays a direct role in translocation across the membrane. A homomeric c-ring of between 10-14 subunits forms the central stalk rotor element with the F(1) delta and epsilon subunits. The chain is ATP synthase subunit c from Hyphomonas neptunium (strain ATCC 15444).